We begin with the raw amino-acid sequence, 442 residues long: NALCN channel auxiliary factor 2 (442 aa).

A helical membrane pass occupies residues 42 to 62; sequence LASLLFFTVLLSNHLWLVSAG. 5 N-linked (GlcNAc...) asparagine glycosylation sites follow: asparagine 77, asparagine 100, asparagine 171, asparagine 279, and asparagine 354. A helical membrane pass occupies residues 406–426; the sequence is CVLVLMLLHTMASFSVVQNGV.

This sequence belongs to the NALF family.

It is found in the membrane. Probable component of the NALCN channel complex, a channel that regulates the resting membrane potential and controls neuronal excitability. The chain is NALCN channel auxiliary factor 2 (nalf2) from Xenopus tropicalis (Western clawed frog).